The primary structure comprises 94 residues: ESAT-6-like protein EsxI (94 aa).

It belongs to the WXG100 family. ESAT-6 subfamily.

Its subcellular location is the secreted. This Mycobacterium bovis (strain ATCC BAA-935 / AF2122/97) protein is ESAT-6-like protein EsxI.